A 463-amino-acid chain; its full sequence is Bifunctional protein HldE (463 aa).

Residues M1–T311 form a ribokinase region. Residue N191–E194 participates in ATP binding. Residue D260 is part of the active site. The tract at residues F334–D463 is cytidylyltransferase.

It in the N-terminal section; belongs to the carbohydrate kinase PfkB family. This sequence in the C-terminal section; belongs to the cytidylyltransferase family. Homodimer.

It carries out the reaction D-glycero-beta-D-manno-heptose 7-phosphate + ATP = D-glycero-beta-D-manno-heptose 1,7-bisphosphate + ADP + H(+). The enzyme catalyses D-glycero-beta-D-manno-heptose 1-phosphate + ATP + H(+) = ADP-D-glycero-beta-D-manno-heptose + diphosphate. Its pathway is nucleotide-sugar biosynthesis; ADP-L-glycero-beta-D-manno-heptose biosynthesis; ADP-L-glycero-beta-D-manno-heptose from D-glycero-beta-D-manno-heptose 7-phosphate: step 1/4. The protein operates within nucleotide-sugar biosynthesis; ADP-L-glycero-beta-D-manno-heptose biosynthesis; ADP-L-glycero-beta-D-manno-heptose from D-glycero-beta-D-manno-heptose 7-phosphate: step 3/4. Functionally, catalyzes the phosphorylation of D-glycero-D-manno-heptose 7-phosphate at the C-1 position to selectively form D-glycero-beta-D-manno-heptose-1,7-bisphosphate. Catalyzes the ADP transfer from ATP to D-glycero-beta-D-manno-heptose 1-phosphate, yielding ADP-D-glycero-beta-D-manno-heptose. This chain is Bifunctional protein HldE, found in Helicobacter pylori (strain Shi470).